Reading from the N-terminus, the 334-residue chain is Regulatory protein E2 (334 aa).

Residues 1-127 form a transactivation domain region; that stretch reads MYLCLESLQK…SKVLSPSVTS (127 aa). The disordered stretch occupies residues 127–240; it reads SSLRVGSTGG…SSTPKRQASS (114 aa). The span at 229 to 240 shows a compositional bias: polar residues; the sequence is GRSSTPKRQASS. Residues 251–334 form a DNA-binding domain region; sequence DPPVLLLQGA…SAVKGALDGL (84 aa).

It belongs to the papillomaviridae E2 protein family. Binds DNA as homodimer. Interacts with protein E1; this interaction greatly increases E1 DNA-binding activity. Interacts with protein L1; this interaction enhances E2-dependent replication and transcription activation. Interacts with protein L2; this interaction inhibits E2 transcriptional activity but not DNA replication function E2. Interacts with protein E7; this interaction inhibits E7 oncogenic activity. Interacts with host TAF1; this interaction modulates E2-dependent transcriptional regulation. Interacts with host BRD4; this interaction mediates E2 transcriptional activation function. Additionally, the interaction with host BRD4 on mitotic chromosomes mediates tethering of the viral genome. Interacts with host TOPBP1; this interaction is required for optimal viral DNA replication. Post-translationally, phosphorylated.

The protein resides in the host nucleus. Plays a role in the initiation of viral DNA replication. A dimer of E2 interacts with a dimer of E1 in order to improve specificity of E1 DNA binding activity. Once the complex recognizes and binds DNA at specific sites, the E2 dimer is removed from DNA. E2 also regulates viral transcription through binding to the E2RE response element (5'-ACCNNNNNNGGT-3') present in multiple copies in the regulatory regions of the viral genome. Activates or represses transcription depending on E2RE's position with regards to proximal promoter elements including the TATA-box. Repression occurs by sterically hindering the assembly of the transcription initiation complex. The chain is Regulatory protein E2 from Bos taurus (Bovine).